Reading from the N-terminus, the 57-residue chain is U-Asilidin(1)-Mar2a (57 aa).

A signal peptide spans Met1 to Ala24. Intrachain disulfides connect Cys28/Cys44, Cys35/Cys48, and Cys43/Cys53.

It belongs to the asilidin-1 family. In terms of tissue distribution, expressed by the venom gland. Exclusively expressed in the venom thoracic glands (and not in body tissues).

The protein resides in the secreted. Its function is as follows. May act as a neurotoxin. This Machimus arthriticus (Breck robberfly) protein is U-Asilidin(1)-Mar2a.